The sequence spans 112 residues: Ribosomal processing cysteine protease Prp (112 aa).

His-22 (proton donor) is an active-site residue. The active-site Nucleophile is the Cys-34.

Belongs to the Prp family. In terms of assembly, homodimer.

Functionally, an essential cysteine protease that cleaves the N-terminus from ribosomal protein bL27. The protein is Ribosomal processing cysteine protease Prp of Bacillus subtilis (strain 168).